Here is a 429-residue protein sequence, read N- to C-terminus: Ribosomal RNA small subunit methyltransferase B (429 aa).

S-adenosyl-L-methionine-binding positions include 254 to 260 (CAAPGGK), Asp-277, Asp-303, and Asp-322. Catalysis depends on Cys-375, which acts as the Nucleophile.

Belongs to the class I-like SAM-binding methyltransferase superfamily. RsmB/NOP family.

It is found in the cytoplasm. It carries out the reaction cytidine(967) in 16S rRNA + S-adenosyl-L-methionine = 5-methylcytidine(967) in 16S rRNA + S-adenosyl-L-homocysteine + H(+). Its function is as follows. Specifically methylates the cytosine at position 967 (m5C967) of 16S rRNA. This chain is Ribosomal RNA small subunit methyltransferase B, found in Escherichia coli O17:K52:H18 (strain UMN026 / ExPEC).